Reading from the N-terminus, the 432-residue chain is Enolase (432 aa).

Residue Gln167 coordinates (2R)-2-phosphoglycerate. Residue Glu209 is the Proton donor of the active site. Asp246, Glu287, and Asp314 together coordinate Mg(2+). Residues Lys339, Arg368, Ser369, and Lys390 each contribute to the (2R)-2-phosphoglycerate site. Lys339 (proton acceptor) is an active-site residue.

It belongs to the enolase family. Mg(2+) is required as a cofactor.

The protein localises to the cytoplasm. Its subcellular location is the secreted. It is found in the cell surface. It carries out the reaction (2R)-2-phosphoglycerate = phosphoenolpyruvate + H2O. Its pathway is carbohydrate degradation; glycolysis; pyruvate from D-glyceraldehyde 3-phosphate: step 4/5. Catalyzes the reversible conversion of 2-phosphoglycerate (2-PG) into phosphoenolpyruvate (PEP). It is essential for the degradation of carbohydrates via glycolysis. The chain is Enolase from Prochlorococcus marinus (strain MIT 9211).